A 51-amino-acid chain; its full sequence is Large ribosomal subunit protein eL39 (51 aa).

The protein belongs to the eukaryotic ribosomal protein eL39 family.

In Methanococcus aeolicus (strain ATCC BAA-1280 / DSM 17508 / OCM 812 / Nankai-3), this protein is Large ribosomal subunit protein eL39.